The sequence spans 424 residues: Zinc metalloproteinase-disintegrin-like brevilysin H2b (424 aa).

A Pyrrolidone carboxylic acid modification is found at Q1. Positions 9 to 207 (RYVKLAIVAD…YKPQCILNEP (199 aa)) constitute a Peptidase M12B domain. N69 carries N-linked (GlcNAc...) asparagine glycosylation. D96 lines the Ca(2+) pocket. Disulfide bonds link C120–C202, C164–C186, and C166–C169. H145 contributes to the Zn(2+) binding site. E146 is a catalytic residue. Residues H149 and H155 each contribute to the Zn(2+) site. N185 carries N-linked (GlcNAc...) asparagine glycosylation. Ca(2+) is bound by residues C202, N205, V217, N220, L222, E224, E227, and D230. The Disintegrin domain occupies 215 to 301 (PPVCGNELLE…DCPTDDLQRN (87 aa)). 14 cysteine pairs are disulfide-bonded: C218–C247, C229–C242, C231–C237, C241–C264, C255–C261, C260–C286, C273–C293, C280–C312, C305–C317, C324–C374, C339–C385, C352–C362, C369–C411, and C405–C417. Residues 279–281 (DCD) carry the D/ECD-tripeptide motif. D281, E284, and D296 together coordinate Ca(2+).

Belongs to the venom metalloproteinase (M12B) family. P-III subfamily. P-IIIa sub-subfamily. As to quaternary structure, monomer. The cofactor is Zn(2+). Post-translationally, glycosylated. In terms of tissue distribution, expressed by the venom gland.

Its subcellular location is the secreted. Its proteolytic activity is inhibited by EDTA, TPEN, 1,10-phenanthroline, and some thiol compounds, but is enhanced by alkaline earth metal ions (Mg2+, Ca2+, Sr2+, and Ba2+). Its activity is not modulated by urea (4 M). Functionally, non-hemorrhagic metalloproteinase that degrades fibrinogen. The alpha chain (FGA) is rapidly degraded, the beta chain (FGB) is degraded very slowly, while the gamma chain is left intact. Shows a prefential cleavage at X-Leu bonds. Cleaves insulin B chain at '29-His-|-Leu-30', '33-Ser-|-His-34', '38-Ala-|-Leu-39' and '40-Tyr-|-Leu-41' bonds. The protein is Zinc metalloproteinase-disintegrin-like brevilysin H2b of Gloydius brevicauda (Korean slamosa snake).